A 321-amino-acid chain; its full sequence is Transcriptional activator protein Pur-alpha (321 aa).

Residues 1–54 (MADRDSGSEQGGAALGSGGSLGHPGSGSGSGGGGGGGGGGGGSGGGGGAPGGLQ) are disordered. A2 is subject to N-acetylalanine. Positions 9–51 (EQGGAALGSGGSLGHPGSGSGSGGGGGGGGGGGGSGGGGGAPG) are enriched in gly residues. S181 carries the post-translational modification Phosphoserine. A compositionally biased stretch (low complexity) spans 294–313 (LHQQQQQQQEETTAATLLLQ). A disordered region spans residues 294–321 (LHQQQQQQQEETTAATLLLQGEEEGEED).

It belongs to the PUR DNA-binding protein family. Homodimer, heterodimer with PURB and heterotrimer with PURB and YBX1/Y-box protein 1. Interacts with FMR1; this interaction occurs in association with polyribosome.

The protein resides in the nucleus. Functionally, this is a probable transcription activator that specifically binds the purine-rich single strand of the PUR element located upstream of the c-Myc gene. May play a role in the initiation of DNA replication and in recombination. The polypeptide is Transcriptional activator protein Pur-alpha (Pura) (Mus musculus (Mouse)).